Consider the following 545-residue polypeptide: Ubiquitin carboxyl-terminal hydrolase 17-like protein C (545 aa).

In terms of domain architecture, USP spans 51-348 (CGLQNTGNSC…NAYVLFYVQQ (298 aa)). C60 serves as the catalytic Nucleophile. H307 functions as the Proton acceptor in the catalytic mechanism. 2 disordered regions span residues 368–442 (DPEY…QKLG) and 489–539 (WGRD…KQGQ). Over residues 374 to 385 (KKSRRKKHKKKS) the composition is skewed to basic residues. Composition is skewed to basic and acidic residues over residues 393–404 (EPCKNREKRATK) and 489–505 (WGRDAPDKENQPWHNAD). Residues 508 to 519 (LTSQDPVNTGQL) show a composition bias toward polar residues. The span at 524 to 537 (GRRRSKKGKNKNKQ) shows a compositional bias: basic residues.

This sequence belongs to the peptidase C19 family. USP17 subfamily. Expressed in T cells.

The protein resides in the nucleus. It localises to the endoplasmic reticulum. It catalyses the reaction Thiol-dependent hydrolysis of ester, thioester, amide, peptide and isopeptide bonds formed by the C-terminal Gly of ubiquitin (a 76-residue protein attached to proteins as an intracellular targeting signal).. Deubiquitinating enzyme that removes conjugated ubiquitin from specific proteins to regulate different cellular processes. Important for preimplantation stage embryonic development. The chain is Ubiquitin carboxyl-terminal hydrolase 17-like protein C from Mus musculus (Mouse).